We begin with the raw amino-acid sequence, 274 residues long: Formamidopyrimidine-DNA glycosylase (274 aa).

The Schiff-base intermediate with DNA role is filled by P2. E3 functions as the Proton donor in the catalytic mechanism. K59 (proton donor; for beta-elimination activity) is an active-site residue. DNA-binding residues include H93, R112, and R155. An FPG-type zinc finger spans residues 240–274 (QVYGRTGRPCPRCGQPLERVRLGGRSTHFCPRCQV). R264 (proton donor; for delta-elimination activity) is an active-site residue.

Belongs to the FPG family. In terms of assembly, monomer. Zn(2+) serves as cofactor.

It catalyses the reaction Hydrolysis of DNA containing ring-opened 7-methylguanine residues, releasing 2,6-diamino-4-hydroxy-5-(N-methyl)formamidopyrimidine.. The enzyme catalyses 2'-deoxyribonucleotide-(2'-deoxyribose 5'-phosphate)-2'-deoxyribonucleotide-DNA = a 3'-end 2'-deoxyribonucleotide-(2,3-dehydro-2,3-deoxyribose 5'-phosphate)-DNA + a 5'-end 5'-phospho-2'-deoxyribonucleoside-DNA + H(+). Functionally, involved in base excision repair of DNA damaged by oxidation or by mutagenic agents. Acts as a DNA glycosylase that recognizes and removes damaged bases. Has a preference for oxidized purines, such as 7,8-dihydro-8-oxoguanine (8-oxoG). Has AP (apurinic/apyrimidinic) lyase activity and introduces nicks in the DNA strand. Cleaves the DNA backbone by beta-delta elimination to generate a single-strand break at the site of the removed base with both 3'- and 5'-phosphates. This Moorella thermoacetica (strain ATCC 39073 / JCM 9320) protein is Formamidopyrimidine-DNA glycosylase.